A 115-amino-acid polypeptide reads, in one-letter code: DNA-binding protein APE_1087b (115 aa).

The protein belongs to the PDCD5 family.

The chain is DNA-binding protein APE_1087b from Aeropyrum pernix (strain ATCC 700893 / DSM 11879 / JCM 9820 / NBRC 100138 / K1).